A 1099-amino-acid polypeptide reads, in one-letter code: Exonuclease/helicase subunit RexB (1099 aa).

4 residues coordinate [4Fe-4S] cluster: cysteine 766, cysteine 1056, cysteine 1059, and cysteine 1065.

Belongs to the helicase family. AddB/RexB type 2 subfamily. As to quaternary structure, heterodimer of RexA (AddA) and RexB. It depends on Mg(2+) as a cofactor. [4Fe-4S] cluster serves as cofactor.

The heterodimer acts both as an ATP-dependent DNA helicase and an ATP-dependent, dual-direction single-stranded exonuclease. Recognizes the L.lactis chi site (5'-GCGCGTG-3'), which stimulates homologous recombination. This subunit has 5'-&gt;3' exonuclease activity. Functionally, the heterodimer acts as both an ATP-dependent DNA helicase and an ATP-dependent, dual-direction single-stranded exonuclease. Recognizes the chi site generating a DNA molecule suitable for the initiation of homologous recombination. This subunit has 5' -&gt; 3' nuclease activity but not helicase activity. The protein is Exonuclease/helicase subunit RexB of Lactococcus lactis subsp. cremoris (strain MG1363).